We begin with the raw amino-acid sequence, 96 residues long: Aspartyl/glutamyl-tRNA(Asn/Gln) amidotransferase subunit C (96 aa).

This sequence belongs to the GatC family. As to quaternary structure, heterotrimer of A, B and C subunits.

The catalysed reaction is L-glutamyl-tRNA(Gln) + L-glutamine + ATP + H2O = L-glutaminyl-tRNA(Gln) + L-glutamate + ADP + phosphate + H(+). It carries out the reaction L-aspartyl-tRNA(Asn) + L-glutamine + ATP + H2O = L-asparaginyl-tRNA(Asn) + L-glutamate + ADP + phosphate + 2 H(+). Allows the formation of correctly charged Asn-tRNA(Asn) or Gln-tRNA(Gln) through the transamidation of misacylated Asp-tRNA(Asn) or Glu-tRNA(Gln) in organisms which lack either or both of asparaginyl-tRNA or glutaminyl-tRNA synthetases. The reaction takes place in the presence of glutamine and ATP through an activated phospho-Asp-tRNA(Asn) or phospho-Glu-tRNA(Gln). This is Aspartyl/glutamyl-tRNA(Asn/Gln) amidotransferase subunit C from Herpetosiphon aurantiacus (strain ATCC 23779 / DSM 785 / 114-95).